The primary structure comprises 436 residues: Divalent metal cation transporter MntH (436 aa).

Residues 1 to 22 (MDSRSPSLPDDRPDPPEQHLDA) are compositionally biased toward basic and acidic residues. Positions 1–31 (MDSRSPSLPDDRPDPPEQHLDARAGATLRGT) are disordered. 11 consecutive transmembrane segments (helical) span residues 40–60 (ILPF…PGNF), 71–91 (GYSL…IQNL), 115–135 (LVWF…LAEF), 144–164 (LLTG…TFWL), 177–197 (LAVG…VVLA), 216–236 (GSAY…VIYL), 264–284 (VIAA…VAAA), 304–324 (LTPL…LASG), 354–374 (LITM…SSVL), 375–395 (ILSQ…LLLF), and 411–431 (FTVI…YLLW).

The protein belongs to the NRAMP family.

It localises to the cell membrane. In terms of biological role, h(+)-stimulated, divalent metal cation uptake system. The polypeptide is Divalent metal cation transporter MntH (Deinococcus radiodurans (strain ATCC 13939 / DSM 20539 / JCM 16871 / CCUG 27074 / LMG 4051 / NBRC 15346 / NCIMB 9279 / VKM B-1422 / R1)).